Reading from the N-terminus, the 323-residue chain is uncharacterized protein (323 aa).

The segment at 1–21 (MGSYYSTESTKSNESNETTNN) is disordered. Residue G2 is the site of N-myristoyl glycine; by host attachment.

This is an uncharacterized protein from Acanthamoeba polyphaga (Amoeba).